We begin with the raw amino-acid sequence, 354 residues long: Probable cinnamyl alcohol dehydrogenase 5 (354 aa).

Cys43 lines the Zn(2+) pocket. Ser45 contacts NADP(+). Residues His65, Glu66, Cys96, Cys99, Cys102, Cys110, and Cys159 each coordinate Zn(2+). NADP(+) contacts are provided by residues Thr163, 184–189 (GLGGLG), 207–212 (SSSPGK), Thr247, Gly271, and 294–296 (SCI).

It belongs to the zinc-containing alcohol dehydrogenase family. In terms of assembly, homodimer. Zn(2+) serves as cofactor.

It catalyses the reaction (E)-cinnamyl alcohol + NADP(+) = (E)-cinnamaldehyde + NADPH + H(+). The catalysed reaction is (E)-coniferol + NADP(+) = (E)-coniferaldehyde + NADPH + H(+). The enzyme catalyses (E)-sinapyl alcohol + NADP(+) = (E)-sinapaldehyde + NADPH + H(+). It carries out the reaction (E)-4-coumaroyl alcohol + NADP(+) = (E)-4-coumaraldehyde + NADPH + H(+). It catalyses the reaction (E)-caffeyl alcohol + NADP(+) = (E)-caffeyl aldehyde + NADPH + H(+). The protein operates within aromatic compound metabolism; phenylpropanoid biosynthesis. Functionally, involved in lignin biosynthesis. Catalyzes the final step specific for the production of lignin monomers. Catalyzes the NADPH-dependent reduction of coniferaldehyde, 5-hydroxyconiferaldehyde, sinapaldehyde, 4-coumaraldehyde and caffeyl aldehyde to their respective alcohols. The chain is Probable cinnamyl alcohol dehydrogenase 5 from Oryza sativa subsp. japonica (Rice).